A 342-amino-acid chain; its full sequence is Glycerol-1-phosphate dehydrogenase [NAD(P)+] (342 aa).

NAD(+) contacts are provided by residues 84–88 and 106–109; these read GRPLD and TSAS. Substrate is bound at residue D111. Residue S115 participates in NAD(+) binding. D160 contacts substrate. Zn(2+)-binding residues include D160 and H241. H245 is a binding site for substrate. Zn(2+) is bound at residue H260.

It belongs to the glycerol-1-phosphate dehydrogenase family. As to quaternary structure, homodimer. Zn(2+) is required as a cofactor.

It localises to the cytoplasm. It carries out the reaction sn-glycerol 1-phosphate + NAD(+) = dihydroxyacetone phosphate + NADH + H(+). The catalysed reaction is sn-glycerol 1-phosphate + NADP(+) = dihydroxyacetone phosphate + NADPH + H(+). The protein operates within membrane lipid metabolism; glycerophospholipid metabolism. Its function is as follows. Catalyzes the NAD(P)H-dependent reduction of dihydroxyacetonephosphate (DHAP or glycerone phosphate) to glycerol 1-phosphate (G1P). The G1P thus generated is used as the glycerophosphate backbone of phospholipids in the cellular membranes of Archaea. The protein is Glycerol-1-phosphate dehydrogenase [NAD(P)+] of Pyrobaculum neutrophilum (strain DSM 2338 / JCM 9278 / NBRC 100436 / V24Sta) (Thermoproteus neutrophilus).